Here is a 150-residue protein sequence, read N- to C-terminus: Profilin (150 aa).

Belongs to the profilin family. In terms of assembly, occurs in many kinds of cells as a complex with monomeric actin in a 1:1 ratio.

It localises to the cytoplasm. The protein resides in the cytoskeleton. Functionally, binds to actin and affects the structure of the cytoskeleton. At high concentrations, profilin prevents the polymerization of actin, whereas it enhances it at low concentrations. By binding to PIP2, it inhibits the formation of IP3 and DG. This chain is Profilin, found in Trypanosoma brucei brucei.